A 433-amino-acid chain; its full sequence is F-box/kelch-repeat protein At1g24800 (433 aa).

Residues 23–71 (TSMCDLPPKLVGEKILTRIPITSLRAVRSTCKLWNALTKDRVLGKAAAQ) enclose the F-box domain. Kelch repeat units follow at residues 170-216 (HKIL…LYGV) and 286-337 (VLYH…RFDN).

This Arabidopsis thaliana (Mouse-ear cress) protein is F-box/kelch-repeat protein At1g24800.